A 523-amino-acid chain; its full sequence is ATP synthase subunit alpha (523 aa).

179 to 186 (GDRQTGKT) provides a ligand contact to ATP.

This sequence belongs to the ATPase alpha/beta chains family. F-type ATPases have 2 components, CF(1) - the catalytic core - and CF(0) - the membrane proton channel. CF(1) has five subunits: alpha(3), beta(3), gamma(1), delta(1), epsilon(1). CF(0) has three main subunits: a(1), b(2) and c(9-12). The alpha and beta chains form an alternating ring which encloses part of the gamma chain. CF(1) is attached to CF(0) by a central stalk formed by the gamma and epsilon chains, while a peripheral stalk is formed by the delta and b chains.

It is found in the cell inner membrane. The catalysed reaction is ATP + H2O + 4 H(+)(in) = ADP + phosphate + 5 H(+)(out). Its function is as follows. Produces ATP from ADP in the presence of a proton gradient across the membrane. The alpha chain is a regulatory subunit. This chain is ATP synthase subunit alpha, found in Vibrio vulnificus (strain YJ016).